A 193-amino-acid polypeptide reads, in one-letter code: Rho-related GTP-binding protein RhoA-B (193 aa).

Residues 12-19 (GDGACGKT), 30-37 (FPEVYVPT), 59-63 (DTAGQ), 117-120 (NKKD), and 160-162 (SAK) each bind GTP. A glycan ((Microbial infection) O-linked (GlcNAc) tyrosine; by Yersinia Afp18) is linked at tyrosine 34. The residue at position 190 (cysteine 190) is a Cysteine methyl ester. Cysteine 190 is lipidated: S-geranylgeranyl cysteine. The propeptide at 191–193 (CLL) is removed in mature form.

The protein belongs to the small GTPase superfamily. Rho family. Post-translationally, (Microbial infection) Glycosylated at Tyr-34 by Yersinia ruckeri toxin Afp18. Mono-O-GlcNAcylation by Afp18 inhibits RhoA activation by guanine nucleotide exchange factors and blocks RhoA signaling.

It localises to the cell membrane. Its function is as follows. Regulates a signal transduction pathway linking plasma membrane receptors to the assembly of focal adhesions and actin stress fibers. This chain is Rho-related GTP-binding protein RhoA-B, found in Danio rerio (Zebrafish).